The sequence spans 447 residues: Serine/threonine-protein phosphatase 2A 55 kDa regulatory subunit B alpha isoform (447 aa).

At Ala-2 the chain carries N-acetylalanine. WD repeat units lie at residues 11–80 (QWCF…FQSH), 94–174 (EKIN…IFAN), 175–218 (AHTY…VDIK), 227–270 (EVIT…KLFE), 288–325 (ISDV…TYQV), 347–381 (ECCW…TLEA), and 414–446 (DFNK…QDKV).

It belongs to the phosphatase 2A regulatory subunit B family. As to quaternary structure, PP2A consists of a common heterodimeric core enzyme, composed of a 36 kDa catalytic subunit (subunit C) and a 65 kDa constant regulatory subunit (PR65 or subunit A), that associates with a variety of regulatory subunits. Proteins that associate with the core dimer include three families of regulatory subunits B (the R2/B/PR55/B55, R3/B''/PR72/PR130/PR59 and R5/B'/B56 families), the 48 kDa variable regulatory subunit, viral proteins, and cell signaling molecules. Interacts with the PP2A C catalytic subunit PPP2CA. Interacts with the PP2A A subunit PPP2R1A. Interacts with TP53. Interacts with IER5. Interacts with MFHAS1; the interaction is direct. Interacts with PABIR1/FAM122A (via its N-terminus); the interaction is direct and inhibits PP2A activity. Interacts with ARPP19; the interaction is direct and inhibits PP2A activity. Interacts with CRTC3. In terms of tissue distribution, expressed in all tissues examined.

Its function is as follows. Substrate-recognition subunit of protein phosphatase 2A (PP2A) that plays a key role in cell cycle by controlling mitosis entry and exit. Involved in chromosome clustering during late mitosis by mediating dephosphorylation of MKI67. Essential for serine/threonine-protein phosphatase 2A-mediated dephosphorylation of WEE1, preventing its ubiquitin-mediated proteolysis, increasing WEE1 protein levels, and promoting the G2/M checkpoint. This Homo sapiens (Human) protein is Serine/threonine-protein phosphatase 2A 55 kDa regulatory subunit B alpha isoform (PPP2R2A).